A 233-amino-acid polypeptide reads, in one-letter code: Large ribosomal subunit protein uL1 (233 aa).

Belongs to the universal ribosomal protein uL1 family. In terms of assembly, part of the 50S ribosomal subunit.

Functionally, binds directly to 23S rRNA. The L1 stalk is quite mobile in the ribosome, and is involved in E site tRNA release. In terms of biological role, protein L1 is also a translational repressor protein, it controls the translation of the L11 operon by binding to its mRNA. The protein is Large ribosomal subunit protein uL1 of Thermotoga petrophila (strain ATCC BAA-488 / DSM 13995 / JCM 10881 / RKU-1).